Reading from the N-terminus, the 203-residue chain is Chromophore lyase CpcT/CpeT 3 (203 aa).

The protein belongs to the CpcT/CpeT biliprotein lyase family.

In terms of biological role, covalently attaches a chromophore to Cys residue(s) of phycobiliproteins. The sequence is that of Chromophore lyase CpcT/CpeT 3 from Gloeobacter violaceus (strain ATCC 29082 / PCC 7421).